A 585-amino-acid polypeptide reads, in one-letter code: Switch-associated protein 70 (585 aa).

Residues 210 to 306 (DVLKQGYMIK…WIQAIHSTIH (97 aa)) enclose the PH domain. A coiled-coil region spans residues 316-532 (HKEARQRRKE…KLEMAAKMTK (217 aa)).

The SWAP complex consists of NPM1, NCL, PARP1 and SWAP70. In terms of processing, tyrosine-phosphorylated.

The protein localises to the cytoplasm. It is found in the cell membrane. The protein resides in the nucleus. Its subcellular location is the cell projection. It localises to the lamellipodium. In terms of biological role, phosphatidylinositol 3,4,5-trisphosphate-dependent guanine nucleotide exchange factor (GEF) which, independently of RAS, transduces signals from tyrosine kinase receptors to RAC. It also mediates signaling of membrane ruffling. Regulates the actin cytoskeleton as an effector or adapter protein in response to agonist stimulated phosphatidylinositol (3,4)-bisphosphate production and cell protrusion. The protein is Switch-associated protein 70 (SWAP70) of Bos taurus (Bovine).